The chain runs to 541 residues: Chaperonin GroEL 2 (541 aa).

Residues threonine 29–proline 32, aspartate 86–threonine 90, glycine 413, asparagine 476–alanine 478, and aspartate 492 each bind ATP.

Belongs to the chaperonin (HSP60) family. Forms a cylinder of 14 subunits composed of two heptameric rings stacked back-to-back. Interacts with the co-chaperonin GroES.

The protein localises to the secreted. It localises to the capsule. The protein resides in the cell surface. Its subcellular location is the cell wall. It carries out the reaction ATP + H2O + a folded polypeptide = ADP + phosphate + an unfolded polypeptide.. Together with its co-chaperonin GroES, plays an essential role in assisting protein folding. The GroEL-GroES system forms a nano-cage that allows encapsulation of the non-native substrate proteins and provides a physical environment optimized to promote and accelerate protein folding. This chain is Chaperonin GroEL 2, found in Mycolicibacterium vanbaalenii (strain DSM 7251 / JCM 13017 / BCRC 16820 / KCTC 9966 / NRRL B-24157 / PYR-1) (Mycobacterium vanbaalenii).